We begin with the raw amino-acid sequence, 212 residues long: Cyclin-P4-1 (212 aa).

This sequence belongs to the cyclin family. Cyclin U/P subfamily.

The polypeptide is Cyclin-P4-1 (CYCP4-1) (Oryza sativa subsp. japonica (Rice)).